Reading from the N-terminus, the 479-residue chain is PTS system glucose-specific EIICB component (479 aa).

The PTS EIIC type-1 domain occupies Met-1–Lys-388. The next 9 helical transmembrane spans lie at Ser-15 to Ala-35, Ala-51 to Phe-71, Leu-80 to Phe-100, Tyr-112 to Phe-132, Phe-152 to Trp-172, Gly-252 to Ala-272, Ile-280 to Ile-300, Ile-305 to Ile-325, and Leu-356 to Ile-376. Positions Lys-399 to Gln-479 constitute a PTS EIIB type-1 domain. Residue Cys-421 is the Phosphocysteine intermediate; for EIIB activity of the active site. Cys-421 carries the phosphocysteine modification.

Its subcellular location is the cell inner membrane. The catalysed reaction is N(pros)-phospho-L-histidyl-[protein] + D-glucose(out) = D-glucose 6-phosphate(in) + L-histidyl-[protein]. Functionally, the phosphoenolpyruvate-dependent sugar phosphotransferase system (sugar PTS), a major carbohydrate active transport system, catalyzes the phosphorylation of incoming sugar substrates concomitantly with their translocation across the cell membrane. The enzyme II complex composed of PtsG and Crr is involved in glucose transport. This Buchnera aphidicola subsp. Baizongia pistaciae (strain Bp) protein is PTS system glucose-specific EIICB component (ptsG).